Here is a 79-residue protein sequence, read N- to C-terminus: D-alanyl carrier protein (79 aa).

The region spanning 2–79 (AEFKEQVLDI…MVIKKLEEIR (78 aa)) is the Carrier domain. At Ser-37 the chain carries O-(pantetheine 4'-phosphoryl)serine.

The protein belongs to the DltC family. Post-translationally, 4'-phosphopantetheine is transferred from CoA to a specific serine of apo-DCP.

The protein localises to the cytoplasm. The protein operates within cell wall biogenesis; lipoteichoic acid biosynthesis. Functionally, carrier protein involved in the D-alanylation of lipoteichoic acid (LTA). The loading of thioester-linked D-alanine onto DltC is catalyzed by D-alanine--D-alanyl carrier protein ligase DltA. The DltC-carried D-alanyl group is further transferred to cell membrane phosphatidylglycerol (PG) by forming an ester bond, probably catalyzed by DltD. D-alanylation of LTA plays an important role in modulating the properties of the cell wall in Gram-positive bacteria, influencing the net charge of the cell wall. The chain is D-alanyl carrier protein from Bacillus anthracis (strain CDC 684 / NRRL 3495).